A 289-amino-acid chain; its full sequence is Probable aquaporin PIP-type 7a (289 aa).

Residues 1 to 39 are disordered; it reads MEAKEQDVSLGANKFPERQPLGIAAQSQDEPKDYQEPPP. At 1 to 57 the chain is on the cytoplasmic side; that stretch reads MEAKEQDVSLGANKFPERQPLGIAAQSQDEPKDYQEPPPAPLFEPSELTSWSFYRAG. The chain crosses the membrane as a helical span at residues 58-78; it reads IAEFIATFLFLYITVLTVMGV. Topologically, residues 79–91 are extracellular; the sequence is VRESSKCKTVGIQ. The chain crosses the membrane as a helical span at residues 92-112; it reads GIAWAFGGMIFALVYCTAGIS. The Cytoplasmic segment spans residues 113–135; sequence GGHINPAVTFGLFLARKLSLTRA. Residues 117–119 carry the NPA 1 motif; that stretch reads NPA. The chain crosses the membrane as a helical span at residues 136-156; it reads IFYMVMQVLGAICGAGVVKGF. The Extracellular portion of the chain corresponds to 157–178; sequence EGKQRFGDLNGGANFVAPGYTK. Residues 179-199 traverse the membrane as a helical segment; sequence GDGLGAEIVGTFILVYTVFSA. Over 200–212 the chain is Cytoplasmic; sequence TDAKRSARDSHVP. A helical transmembrane segment spans residues 213–233; sequence ILAPLPIGFAVFLVHLATIPI. The Extracellular portion of the chain corresponds to 234 to 260; sequence TGTGINPARSLGAAIVFNKKIGWNDHW. Positions 239–241 match the NPA 2 motif; sequence NPA. A helical transmembrane segment spans residues 261-281; the sequence is IFWVGPFIGAALAALYHQVVI. The Cytoplasmic segment spans residues 282-289; the sequence is RAIPFKSK.

Belongs to the MIP/aquaporin (TC 1.A.8) family. PIP (TC 1.A.8.11) subfamily.

Its subcellular location is the cell membrane. In terms of biological role, aquaporins facilitate the transport of water and small neutral solutes across cell membranes. This Pisum sativum (Garden pea) protein is Probable aquaporin PIP-type 7a (TRG-31).